Reading from the N-terminus, the 272-residue chain is Glutamate racemase (272 aa).

Substrate contacts are provided by residues 9–10 (DS) and 41–42 (YG). Cys73 (proton donor/acceptor) is an active-site residue. A substrate-binding site is contributed by 74 to 75 (NT). Catalysis depends on Cys183, which acts as the Proton donor/acceptor. Residue 184-185 (TH) coordinates substrate.

The protein belongs to the aspartate/glutamate racemases family.

The enzyme catalyses L-glutamate = D-glutamate. It functions in the pathway cell wall biogenesis; peptidoglycan biosynthesis. Its function is as follows. Provides the (R)-glutamate required for cell wall biosynthesis. In Shewanella sp. (strain MR-4), this protein is Glutamate racemase.